We begin with the raw amino-acid sequence, 176 residues long: MTIILCGLPTSGKSSLGKALAKFLNLPFYDLDDLIVSNYSSALYSSSAEIYKAYGDQKFSECEARILETLPPEDALISLGGGTLMYEASYRAIQTRGALVFLSVELPLIYERLEKRGLPERLKEAMKTKPLSEILTERIDRMKEIADYIFPVDHVDHSSKSSLEQASQDLITLLKS.

10 to 15 (TSGKSS) serves as a coordination point for ATP. Position 14 (Ser-14) interacts with Mg(2+). Asp-32, Gly-81, and Arg-138 together coordinate substrate.

The protein belongs to the shikimate kinase family. As to quaternary structure, monomer. It depends on Mg(2+) as a cofactor.

It is found in the cytoplasm. The enzyme catalyses shikimate + ATP = 3-phosphoshikimate + ADP + H(+). Its pathway is metabolic intermediate biosynthesis; chorismate biosynthesis; chorismate from D-erythrose 4-phosphate and phosphoenolpyruvate: step 5/7. Catalyzes the specific phosphorylation of the 3-hydroxyl group of shikimic acid using ATP as a cosubstrate. This chain is Shikimate kinase, found in Chlamydia pneumoniae (Chlamydophila pneumoniae).